A 297-amino-acid polypeptide reads, in one-letter code: Glycosylphosphatidylinositol anchor biosynthesis protein 11 (297 aa).

The segment covering 1–18 (MTSASPSPLRAANAASSA) has biased composition (low complexity). Residues 1 to 26 (MTSASPSPLRAANAASSAPVPPPAMK) form a disordered region. 2 consecutive transmembrane segments (helical) span residues 44 to 64 (SFVH…ALVA) and 76 to 96 (FLAL…GSVL). Residues 97 to 140 (PSPPASPVSDGDEKEKEKEKEKEKEKEKRKLPLRAGKLPRKKNQ) form a disordered region. The segment covering 107-126 (GDEKEKEKEKEKEKEKEKRK) has biased composition (basic and acidic residues). Residues 127–140 (LPLRAGKLPRKKNQ) are compositionally biased toward basic residues. N139 carries N-linked (GlcNAc...) asparagine glycosylation. 4 helical membrane-spanning segments follow: residues 157-177 (LILT…LFGA), 187-207 (VLCA…VHGV), 225-245 (VWGG…PIPL), and 253-273 (AFPI…SVVC).

This sequence belongs to the PIGF family.

It is found in the endoplasmic reticulum membrane. The protein operates within glycolipid biosynthesis; glycosylphosphatidylinositol-anchor biosynthesis. In terms of biological role, acts in the GPI biosynthetic pathway between GlcNAc-PI synthesis and GPI transfer to protein. The polypeptide is Glycosylphosphatidylinositol anchor biosynthesis protein 11 (gpi11) (Aspergillus fumigatus (strain ATCC MYA-4609 / CBS 101355 / FGSC A1100 / Af293) (Neosartorya fumigata)).